The chain runs to 168 residues: Cell division inhibitor SulA (168 aa).

The segment at 105–111 is ftsZ binding; it reads ALETGNY. The interval 161–168 is lon protease binding; sequence RIHSRMVH.

Belongs to the SulA family. Interacts with FtsZ. Post-translationally, is rapidly cleaved and degraded by the Lon protease once DNA damage is repaired.

Component of the SOS system and an inhibitor of cell division. Accumulation of SulA causes rapid cessation of cell division and the appearance of long, non-septate filaments. In the presence of GTP, binds a polymerization-competent form of FtsZ in a 1:1 ratio, thus inhibiting FtsZ polymerization and therefore preventing it from participating in the assembly of the Z ring. This mechanism prevents the premature segregation of damaged DNA to daughter cells during cell division. This is Cell division inhibitor SulA from Cronobacter turicensis (strain DSM 18703 / CCUG 55852 / LMG 23827 / z3032).